A 226-amino-acid chain; its full sequence is MSTVFALSNISKFFGKNNELPIITNANIKIKKGEIVALIGRSGSGKSTLLHIAGLLDTPSSGNIFINNIECSNKTSDKDKTFLRRHFLGFIYQFHHLLQEFSVLENVMLPQIIIGKSKSIAKKNAMEILERVKLQDKFSMSISQLSGGERQRVAIARSLINCPLIVLADEPTGSLDNNTAFEVFSLLQEYAKEKNIAIFLATHNKSLAQKACRIVEINSCMLSSVD.

The ABC transporter domain occupies 5 to 225; it reads FALSNISKFF…EINSCMLSSV (221 aa). 40–47 contributes to the ATP binding site; it reads GRSGSGKS.

Belongs to the ABC transporter superfamily. Lipoprotein translocase (TC 3.A.1.125) family. The complex is composed of two ATP-binding proteins (LolD) and two transmembrane proteins (LolC and LolE).

It localises to the cell inner membrane. Part of the ABC transporter complex LolCDE involved in the translocation of mature outer membrane-directed lipoproteins, from the inner membrane to the periplasmic chaperone, LolA. Responsible for the formation of the LolA-lipoprotein complex in an ATP-dependent manner. The protein is Lipoprotein-releasing system ATP-binding protein LolD of Ehrlichia canis (strain Jake).